We begin with the raw amino-acid sequence, 302 residues long: Pantothenate synthetase (302 aa).

47–54 (MGALHEGH) is an ATP binding site. His54 (proton donor) is an active-site residue. Gln79 is a (R)-pantoate binding site. Gln79 lines the beta-alanine pocket. 165–168 (GEKD) is an ATP binding site. Residue Gln171 participates in (R)-pantoate binding. Residues Val194 and 202-205 (LSSR) contribute to the ATP site.

The protein belongs to the pantothenate synthetase family. Homodimer.

The protein localises to the cytoplasm. It carries out the reaction (R)-pantoate + beta-alanine + ATP = (R)-pantothenate + AMP + diphosphate + H(+). Its pathway is cofactor biosynthesis; (R)-pantothenate biosynthesis; (R)-pantothenate from (R)-pantoate and beta-alanine: step 1/1. In terms of biological role, catalyzes the condensation of pantoate with beta-alanine in an ATP-dependent reaction via a pantoyl-adenylate intermediate. In Saccharopolyspora erythraea (strain ATCC 11635 / DSM 40517 / JCM 4748 / NBRC 13426 / NCIMB 8594 / NRRL 2338), this protein is Pantothenate synthetase.